A 291-amino-acid chain; its full sequence is MTKDRLSALKAAQSEDEQDDDMHMDTGNAQYMEEFFEQVEEIRGSVDIIANNVEEVKKKHSAILSNPVNDQKTKEELDELMAVIKRAANKVRGKLKLIENAIDHDEQGAGNADLRIRKTQHSTLSRRFVEVMTDYNKTQTDYRERCKGRIQRQLDIAGKQVGDEDLEEMIESGNPGVFTQGIITDTQQAKQTLADIEARHNDIMKLESSIRELHDMFMDMAMLVESQGEMVDRIEYNVEHAKEFVDRAVADTKKAVQYQSKARRKKICILVTGVILITGLIIFILFYAKVL.

The segment at 1–24 is disordered; the sequence is MTKDRLSALKAAQSEDEQDDDMHM. Residues 1–266 lie on the Cytoplasmic side of the membrane; that stretch reads MTKDRLSALK…QYQSKARRKK (266 aa). A coiled-coil region spans residues 69-95; that stretch reads NDQKTKEELDELMAVIKRAANKVRGKL. Positions 193 to 255 constitute a t-SNARE coiled-coil homology domain; sequence LADIEARHND…DRAVADTKKA (63 aa). A helical; Anchor for type IV membrane protein transmembrane segment spans residues 267–287; it reads ICILVTGVILITGLIIFILFY. The Extracellular segment spans residues 288-291; that stretch reads AKVL.

The protein belongs to the syntaxin family. In terms of assembly, interacts (via N-terminus, in open or in closed conformation) with unc-18; the interaction is direct. Interaction in open conformation with unc-18 promotes synaptic vesicle docking and tethering. Interaction via N-terminus with unc-18 mediates the secretion of the neurotransmitter acetylcholine from cholinergic motor neurons. Interaction with unc-18 is reduced in the presence of unc-13. As to expression, expressed throughout the head ganglion, nerve ring, ventral cord, dorsal cord, intestine, vulva and spermatheca.

It is found in the cell membrane. The protein localises to the cell projection. It localises to the axon. Its subcellular location is the dendrite. The protein resides in the perikaryon. Plays a critical role in several secretory processes, including cuticle secretion and neurotransmitter release, and probably assists in neuronal membrane maturation or the final stages of neuronal differentiation. Plays a role in synaptic vesicle docking and tethering through its association with unc-18. Through binding to unc-18 mediates the release of the neurotransmitter acetylcholine from cholinergic motor neurons, and thereby promotes locomotory behaviors. Essential for embryonic viability and development. Has a role in dauer formation and adult life span. Required for locomotion. Probably by regulating neuronal transmission downstream of lin-3 and receptor lin-23 and phospholipase plc-3 and upstream of innexin unc-7 and egl-4/PKG in ALA neurons, involved in the decrease in pharyngeal pumping during the quiescent state that precedes each larval molt. This is Syntaxin-1A homolog from Caenorhabditis elegans.